A 143-amino-acid chain; its full sequence is Transmembrane protein 80 (143 aa).

4 helical membrane-spanning segments follow: residues 22 to 42 (LLCL…LLLV), 47 to 67 (VFTY…LMGI), 88 to 108 (LAAS…FLLW), and 122 to 142 (PLLA…AAFV).

Its subcellular location is the membrane. It localises to the cell projection. The protein localises to the cilium. The sequence is that of Transmembrane protein 80 (TMEM80) from Bos taurus (Bovine).